The sequence spans 329 residues: Tyrosine--tRNA ligase (329 aa).

Residues tyrosine 31, tyrosine 157, glutamine 161, aspartate 164, and glutamine 179 each coordinate L-tyrosine. A 'KMSKS' region motif is present at residues lysine 220–serine 224. Residue lysine 223 coordinates ATP.

The protein belongs to the class-I aminoacyl-tRNA synthetase family. TyrS type 4 subfamily. Homodimer.

It localises to the cytoplasm. It catalyses the reaction tRNA(Tyr) + L-tyrosine + ATP = L-tyrosyl-tRNA(Tyr) + AMP + diphosphate + H(+). In terms of biological role, catalyzes the attachment of tyrosine to tRNA(Tyr) in a two-step reaction: tyrosine is first activated by ATP to form Tyr-AMP and then transferred to the acceptor end of tRNA(Tyr). In Picrophilus torridus (strain ATCC 700027 / DSM 9790 / JCM 10055 / NBRC 100828 / KAW 2/3), this protein is Tyrosine--tRNA ligase.